We begin with the raw amino-acid sequence, 165 residues long: Cysteine-rich hydrophobic domain-containing protein 2 (165 aa).

A coiled-coil region spans residues 1–26; sequence MADFDEIYEEEEDEERALEEQLLKYS. The CHIC motif (Cys-rich) motif lies at 88–106; the sequence is CGCLCCCCTLGCSMWPVIC.

This sequence belongs to the CHIC family. In terms of processing, palmitoylation in the CHIC motif is required for membrane association.

The protein resides in the membrane. It localises to the golgi apparatus. This Mus musculus (Mouse) protein is Cysteine-rich hydrophobic domain-containing protein 2 (Chic2).